Reading from the N-terminus, the 325-residue chain is NADH-quinone oxidoreductase subunit H (325 aa).

8 helical membrane-spanning segments follow: residues I11–F31, A81–V101, I114–G134, L154–F174, V186–V206, F237–F257, L265–I285, and V304–A324.

The protein belongs to the complex I subunit 1 family. NDH-1 is composed of 13 different subunits. Subunits NuoA, H, J, K, L, M, N constitute the membrane sector of the complex.

The protein resides in the cell inner membrane. It catalyses the reaction a quinone + NADH + 5 H(+)(in) = a quinol + NAD(+) + 4 H(+)(out). Its function is as follows. NDH-1 shuttles electrons from NADH, via FMN and iron-sulfur (Fe-S) centers, to quinones in the respiratory chain. The immediate electron acceptor for the enzyme in this species is believed to be ubiquinone. Couples the redox reaction to proton translocation (for every two electrons transferred, four hydrogen ions are translocated across the cytoplasmic membrane), and thus conserves the redox energy in a proton gradient. This subunit may bind ubiquinone. This is NADH-quinone oxidoreductase subunit H from Yersinia enterocolitica serotype O:8 / biotype 1B (strain NCTC 13174 / 8081).